Consider the following 276-residue polypeptide: Radial spoke head protein 9 homolog (276 aa).

The protein belongs to the flagellar radial spoke RSP9 family. Component of the axonemal radial spoke 1 (RS1) and 2 (RS2) complexes, at least composed of spoke head proteins RSPH1, RSPH3, RSPH9 and the cilia-specific component RSPH4A or sperm-specific component RSPH6A, spoke stalk proteins RSPH14, DNAJB13, DYDC1, ROPN1L and NME5, and the RS1 complex-specific anchor protein IQUB. Interacts with IQUB. Interacts with RSPH3B. Interacts with RSPH4A. Interacts with RSPH6A. Interacts with CFAP61. Interacts with LRRC23.

It localises to the cytoplasm. The protein localises to the cytoskeleton. It is found in the cilium axoneme. Its subcellular location is the flagellum axoneme. The protein resides in the cell projection. It localises to the kinocilium. In terms of biological role, functions as part of axonemal radial spoke complexes that play an important part in the motility of sperm and cilia. Essential for both the radial spoke head assembly and the central pair microtubule stability in ependymal motile cilia. Required for motility of olfactory and neural cilia and for the structural integrity of ciliary axonemes in both 9+0 and 9+2 motile cilia. The polypeptide is Radial spoke head protein 9 homolog (RSPH9) (Bos taurus (Bovine)).